The sequence spans 310 residues: tRNA-cytidine(32) 2-sulfurtransferase (310 aa).

The short motif at 44–49 (SGGKDS) is the PP-loop motif element. Residues C119, C122, and C210 each coordinate [4Fe-4S] cluster.

It belongs to the TtcA family. In terms of assembly, homodimer. The cofactor is Mg(2+). [4Fe-4S] cluster is required as a cofactor.

It is found in the cytoplasm. The enzyme catalyses cytidine(32) in tRNA + S-sulfanyl-L-cysteinyl-[cysteine desulfurase] + AH2 + ATP = 2-thiocytidine(32) in tRNA + L-cysteinyl-[cysteine desulfurase] + A + AMP + diphosphate + H(+). The protein operates within tRNA modification. Catalyzes the ATP-dependent 2-thiolation of cytidine in position 32 of tRNA, to form 2-thiocytidine (s(2)C32). The sulfur atoms are provided by the cysteine/cysteine desulfurase (IscS) system. This Saccharophagus degradans (strain 2-40 / ATCC 43961 / DSM 17024) protein is tRNA-cytidine(32) 2-sulfurtransferase.